The sequence spans 604 residues: Glutamine--fructose-6-phosphate aminotransferase [isomerizing] (604 aa).

Cysteine 2 functions as the Nucleophile; for GATase activity in the catalytic mechanism. The Glutamine amidotransferase type-2 domain occupies 2–218 (CGIVGVVGNR…DKELVILTKD (217 aa)). 2 SIS domains span residues 284 to 423 (IITS…ANGK) and 456 to 594 (VQAL…VDKP). Lysine 599 serves as the catalytic For Fru-6P isomerization activity.

In terms of assembly, homodimer.

The protein resides in the cytoplasm. The catalysed reaction is D-fructose 6-phosphate + L-glutamine = D-glucosamine 6-phosphate + L-glutamate. Catalyzes the first step in hexosamine metabolism, converting fructose-6P into glucosamine-6P using glutamine as a nitrogen source. The sequence is that of Glutamine--fructose-6-phosphate aminotransferase [isomerizing] from Streptococcus pyogenes serotype M1.